A 271-amino-acid chain; its full sequence is tRNA (guanine-N(7)-)-methyltransferase (271 aa).

The S-adenosyl-L-methionine site is built by Glu95, Glu120, Asp147, and Asp175. Asp175 is a catalytic residue. Residues Lys179, Asp211, and 249 to 252 (THFE) contribute to the substrate site.

It belongs to the class I-like SAM-binding methyltransferase superfamily. TrmB family.

The catalysed reaction is guanosine(46) in tRNA + S-adenosyl-L-methionine = N(7)-methylguanosine(46) in tRNA + S-adenosyl-L-homocysteine. Its pathway is tRNA modification; N(7)-methylguanine-tRNA biosynthesis. Functionally, catalyzes the formation of N(7)-methylguanine at position 46 (m7G46) in tRNA. The polypeptide is tRNA (guanine-N(7)-)-methyltransferase (Rhodopirellula baltica (strain DSM 10527 / NCIMB 13988 / SH1)).